The sequence spans 166 residues: MTQGRQKDELKDITLLGNQNNTYEFDYRPEVLETFDNKHQGRDYFVKFNCPEFTSLCPITGQPDFATIYISYIPNIKMVESKSLKLYLFSFRNHGDFHEDCMNIIMNDLINLMDPHYIEVWGKFTPRGGISIDPYTNYGRPDTKYEKMAEHRLMNHDMYPEKIDNR.

Cys-57 (thioimide intermediate) is an active-site residue. Asp-64 serves as the catalytic Proton donor. Substrate contacts are provided by residues Val-79 to Ser-81 and His-98 to Glu-99.

It belongs to the GTP cyclohydrolase I family. QueF type 1 subfamily.

The protein localises to the cytoplasm. The catalysed reaction is 7-aminomethyl-7-carbaguanine + 2 NADP(+) = 7-cyano-7-deazaguanine + 2 NADPH + 3 H(+). Its pathway is tRNA modification; tRNA-queuosine biosynthesis. In terms of biological role, catalyzes the NADPH-dependent reduction of 7-cyano-7-deazaguanine (preQ0) to 7-aminomethyl-7-deazaguanine (preQ1). The polypeptide is NADPH-dependent 7-cyano-7-deazaguanine reductase (Staphylococcus epidermidis (strain ATCC 35984 / DSM 28319 / BCRC 17069 / CCUG 31568 / BM 3577 / RP62A)).